Consider the following 240-residue polypeptide: REF/SRPP-like protein At1g67360 (240 aa).

Residues 208–240 (KEDARRKKGGDTAGKKGETTDAADGDKSSSDSE) are disordered.

This sequence belongs to the REF/SRPP family.

The polypeptide is REF/SRPP-like protein At1g67360 (Arabidopsis thaliana (Mouse-ear cress)).